The following is a 48-amino-acid chain: Small polypeptide DEVIL 22 (48 aa).

Residues 7 to 23 traverse the membrane as a helical segment; the sequence is KLNKGHAFTSKCASLVK. The segment at 13–44 is required for DVL/RTFL small polypeptide activity; that stretch reads AFTSKCASLVKEQRARLYILRRCATMLCCWYI.

This sequence belongs to the DVL/RTFL small polypeptides family.

It localises to the cell membrane. Functionally, small polypeptide acting as a regulatory molecule which coordinates cellular responses required for differentiation, growth and development, probably by restricting polar cell proliferation in lateral organs and coordinating socket cell recruitment and differentiation at trichome sites. In Arabidopsis thaliana (Mouse-ear cress), this protein is Small polypeptide DEVIL 22.